Consider the following 184-residue polypeptide: MNIIAGFQNNFSEGLYTKFKSYRYRVFVEYLGWELNCPNNEETRIQFDKVDTAYVVAQDRESNIIGCARLLPTTQPYLLGEIFPQLLNGMPIPCSPEIWELSRFSAVDFSKPPSSSSQAVSSPISIAILQEAINFAREQGAKQLITTSPLGVERLLRAAGFRAHRAGPPMMIDGYSMFACLIDV.

The protein belongs to the autoinducer synthase family.

The catalysed reaction is a fatty acyl-[ACP] + S-adenosyl-L-methionine = an N-acyl-L-homoserine lactone + S-methyl-5'-thioadenosine + holo-[ACP] + H(+). Its function is as follows. Involved in the synthesis of the acyl-homoserine lactone (AHL) signal N-(3-hydroxydodecanoyl)-L-HSL (3-hydroxy-C(12)-HSL or OH-dDHL). Required for normal biofilm development. The chain is Acyl-homoserine-lactone synthase from Acinetobacter baumannii.